A 316-amino-acid polypeptide reads, in one-letter code: Probable inactive poly [ADP-ribose] polymerase SRO4 (316 aa).

Positions 1 to 28 are disordered; that stretch reads MDYSKTEETPINEEQGSTNSSESRSNEE. The segment covering 14-23 has biased composition (low complexity); it reads EQGSTNSSES. Positions 28 to 255 constitute a PARP catalytic domain; it reads ELFSDCDQQH…KSPWISFPVL (228 aa). The RST domain occupies 243–314; sequence KNPKSPWISF…IKSVGQKVHK (72 aa).

Its subcellular location is the nucleus. Functionally, probable inactive ADP-ribosyltransferase that may be involved in stress and developmental responses. This Arabidopsis thaliana (Mouse-ear cress) protein is Probable inactive poly [ADP-ribose] polymerase SRO4 (SRO4).